The chain runs to 502 residues: ATP synthase subunit alpha (502 aa).

The tract at residues 115–135 is disordered; that stretch reads VDGLGPINTTNTRPIESPAPG. 169–176 contributes to the ATP binding site; that stretch reads GDRQTGKT.

Belongs to the ATPase alpha/beta chains family. As to quaternary structure, F-type ATPases have 2 components, CF(1) - the catalytic core - and CF(0) - the membrane proton channel. CF(1) has five subunits: alpha(3), beta(3), gamma(1), delta(1), epsilon(1). CF(0) has three main subunits: a(1), b(2) and c(9-12). The alpha and beta chains form an alternating ring which encloses part of the gamma chain. CF(1) is attached to CF(0) by a central stalk formed by the gamma and epsilon chains, while a peripheral stalk is formed by the delta and b chains.

It is found in the cell membrane. It carries out the reaction ATP + H2O + 4 H(+)(in) = ADP + phosphate + 5 H(+)(out). In terms of biological role, produces ATP from ADP in the presence of a proton gradient across the membrane. The alpha chain is a regulatory subunit. In Bacillus cereus (strain G9842), this protein is ATP synthase subunit alpha.